The chain runs to 224 residues: Ribonuclease 3 (224 aa).

Residues 5 to 127 (LERLCRRLNY…ILAAIYLDGG (123 aa)) form the RNase III domain. E40 contacts Mg(2+). The active site involves D44. Residues D113 and E116 each coordinate Mg(2+). E116 is a catalytic residue. The region spanning 154–224 (DAKTQLQEFL…AKAMLEQLQG (71 aa)) is the DRBM domain.

This sequence belongs to the ribonuclease III family. As to quaternary structure, homodimer. Requires Mg(2+) as cofactor.

The protein localises to the cytoplasm. The enzyme catalyses Endonucleolytic cleavage to 5'-phosphomonoester.. Functionally, digests double-stranded RNA. Involved in the processing of primary rRNA transcript to yield the immediate precursors to the large and small rRNAs (23S and 16S). Processes some mRNAs, and tRNAs when they are encoded in the rRNA operon. Processes pre-crRNA and tracrRNA of type II CRISPR loci if present in the organism. The chain is Ribonuclease 3 from Legionella pneumophila subsp. pneumophila (strain Philadelphia 1 / ATCC 33152 / DSM 7513).